The sequence spans 20 residues: Fibrinogen beta chain (20 aa).

Residues 1-20 (ATDYEDEEFPGAVPPSVGAR) are disordered. O-linked (GalNAc...) threonine glycosylation is present at Thr-2. Sulfotyrosine is present on Tyr-4.

As to quaternary structure, heterohexamer; disulfide linked. Contains 2 sets of 3 non-identical chains (alpha, beta and gamma). The 2 heterotrimers are in head to head conformation with the N-termini in a small central domain. In terms of processing, conversion of fibrinogen to fibrin is triggered by thrombin, which cleaves fibrinopeptides A and B from alpha and beta chains, and thus exposes the N-terminal polymerization sites responsible for the formation of the soft clot.

Its subcellular location is the secreted. Its function is as follows. Cleaved by the protease thrombin to yield monomers which, together with fibrinogen alpha (FGA) and fibrinogen gamma (FGG), polymerize to form an insoluble fibrin matrix. Fibrin has a major function in hemostasis as one of the primary components of blood clots. In addition, functions during the early stages of wound repair to stabilize the lesion and guide cell migration during re-epithelialization. Was originally thought to be essential for platelet aggregation, based on in vitro studies using anticoagulated blood. However subsequent studies have shown that it is not absolutely required for thrombus formation in vivo. Enhances expression of SELP in activated platelets. Maternal fibrinogen is essential for successful pregnancy. Fibrin deposition is also associated with infection, where it protects against IFNG-mediated hemorrhage. May also facilitate the antibacterial immune response via both innate and T-cell mediated pathways. The chain is Fibrinogen beta chain (FGB) from Elephas maximus (Indian elephant).